Here is a 317-residue protein sequence, read N- to C-terminus: Apolipoprotein E (317 aa).

Positions 1 to 18 (MKALWVALVVTLLAGCRA) are cleaved as a signal peptide. A run of 8 repeats spans residues 79 to 100 (ALME…EQLS), 101 to 122 (PVAQ…ARLG), 123 to 144 (TDME…AMLG), 145 to 166 (QTTD…KRLL), 167 to 188 (RDAE…EGAE), 189 to 210 (RSVS…LGTA), 211 to 232 (TTST…QKLR), and 233 to 254 (GRLE…EQLE). The interval 79 to 254 (ALMEETMKEV…RLDKMREQLE (176 aa)) is 8 X 22 AA approximate tandem repeats. Residue methionine 142 is modified to Methionine sulfoxide. An LDL and other lipoprotein receptors binding region spans residues 157 to 167 (HLRKLRKRLLR). Position 161 to 164 (161 to 164 (LRKR)) interacts with heparin. Residues 209 to 289 (TATTSTLGSQ…GWFQPLVEDL (81 aa)) are lipid-binding and lipoprotein association. O-linked (GalNAc...) threonine glycosylation is present at threonine 211. 228 to 235 (GQKLRGRL) serves as a coordination point for heparin. The homooligomerization stretch occupies residues 265–317 (SQMRLQAETFQARLKGWFQPLVEDLQRQWAGLVEKVQQLAVGTTPTPAASKNQ). The interval 277–289 (RLKGWFQPLVEDL) is specificity for association with VLDL. O-linked (GalNAc...) threonine glycosylation occurs at threonine 310.

It belongs to the apolipoprotein A1/A4/E family. In terms of assembly, homotetramer. May interact with ABCA1; functionally associated with ABCA1 in the biogenesis of HDLs. May interact with APP/A4 amyloid-beta peptide; the interaction is extremely stable in vitro but its physiological significance is unclear. May interact with MAPT. May interact with MAP2. In the cerebrospinal fluid, interacts with secreted SORL1. Interacts with PMEL; this allows the loading of PMEL luminal fragment on ILVs to induce fibril nucleation. APOE exists as multiple glycosylated and sialylated glycoforms within cells and in plasma. The extent of glycosylation and sialylation are tissue and context specific. In terms of processing, glycated in plasma VLDL. Post-translationally, phosphorylated by FAM20C in the extracellular medium.

It localises to the secreted. The protein localises to the extracellular space. It is found in the extracellular matrix. Its subcellular location is the extracellular vesicle. The protein resides in the endosome. It localises to the multivesicular body. Functionally, APOE is an apolipoprotein, a protein associating with lipid particles, that mainly functions in lipoprotein-mediated lipid transport between organs via the plasma and interstitial fluids. APOE is a core component of plasma lipoproteins and is involved in their production, conversion and clearance. Apolipoproteins are amphipathic molecules that interact both with lipids of the lipoprotein particle core and the aqueous environment of the plasma. As such, APOE associates with chylomicrons, chylomicron remnants, very low density lipoproteins (VLDL) and intermediate density lipoproteins (IDL) but shows a preferential binding to high-density lipoproteins (HDL). It also binds a wide range of cellular receptors including the LDL receptor/LDLR and the very low-density lipoprotein receptor/VLDLR that mediate the cellular uptake of the APOE-containing lipoprotein particles. Finally, APOE also has a heparin-binding activity and binds heparan-sulfate proteoglycans on the surface of cells, a property that supports the capture and the receptor-mediated uptake of APOE-containing lipoproteins by cells. The chain is Apolipoprotein E (APOE) from Camelus dromedarius (Dromedary).